The primary structure comprises 102 residues: uncharacterized protein (102 aa).

The tract at residues 77-102 (RKDGDEKSKPNSKDYASRPIRDHSKI) is disordered.

This is an uncharacterized protein from Microplitis demolitor (Parasitoid wasp).